The chain runs to 209 residues: Uracil phosphoribosyltransferase (209 aa).

5-phospho-alpha-D-ribose 1-diphosphate-binding positions include Arg-79, Arg-104, and 131 to 139 (DPMLATGGS). Uracil-binding positions include Ile-194 and 199–201 (GDA). Residue Asp-200 coordinates 5-phospho-alpha-D-ribose 1-diphosphate.

Belongs to the UPRTase family. Requires Mg(2+) as cofactor.

It catalyses the reaction UMP + diphosphate = 5-phospho-alpha-D-ribose 1-diphosphate + uracil. The protein operates within pyrimidine metabolism; UMP biosynthesis via salvage pathway; UMP from uracil: step 1/1. Its activity is regulated as follows. Allosterically activated by GTP. In terms of biological role, catalyzes the conversion of uracil and 5-phospho-alpha-D-ribose 1-diphosphate (PRPP) to UMP and diphosphate. This Clostridium kluyveri (strain NBRC 12016) protein is Uracil phosphoribosyltransferase.